The sequence spans 440 residues: Ribulose bisphosphate carboxylase large chain (440 aa).

N6,N6,N6-trimethyllysine is present on lysine 4. Residues asparagine 113 and threonine 163 each contribute to the substrate site. Lysine 165 (proton acceptor) is an active-site residue. Lysine 167 is a substrate binding site. Positions 191, 193, and 194 each coordinate Mg(2+). Residue lysine 191 is modified to N6-carboxylysine. Histidine 284 functions as the Proton acceptor in the catalytic mechanism. Residues arginine 285, histidine 317, and serine 369 each contribute to the substrate site.

This sequence belongs to the RuBisCO large chain family. Type I subfamily. In terms of assembly, heterohexadecamer of 8 large chains and 8 small chains; disulfide-linked. The disulfide link is formed within the large subunit homodimers. It depends on Mg(2+) as a cofactor. In terms of processing, the disulfide bond which can form in the large chain dimeric partners within the hexadecamer appears to be associated with oxidative stress and protein turnover.

It localises to the plastid. The protein resides in the chloroplast. The catalysed reaction is 2 (2R)-3-phosphoglycerate + 2 H(+) = D-ribulose 1,5-bisphosphate + CO2 + H2O. The enzyme catalyses D-ribulose 1,5-bisphosphate + O2 = 2-phosphoglycolate + (2R)-3-phosphoglycerate + 2 H(+). Functionally, ruBisCO catalyzes two reactions: the carboxylation of D-ribulose 1,5-bisphosphate, the primary event in carbon dioxide fixation, as well as the oxidative fragmentation of the pentose substrate in the photorespiration process. Both reactions occur simultaneously and in competition at the same active site. This is Ribulose bisphosphate carboxylase large chain from Dicksonia antarctica (Australian tree fern).